The sequence spans 479 residues: Dihydrolipoyl dehydrogenase, mitochondrial (479 aa).

Residues 1-19 (FNRXSPGLQGVSSVPLRTY) constitute a mitochondrion transit peptide. Residue K50 is modified to N6-acetyllysine; alternate. K50 carries the N6-succinyllysine; alternate modification. Residues 55 to 64 (EKNETLGGTC) and K73 each bind FAD. Cysteines 64 and 69 form a disulfide. K88, K106, K116, and K127 each carry N6-acetyllysine; alternate. N6-succinyllysine; alternate occurs at positions 88, 106, 116, and 127. FAD is bound at residue G138. 2 positions are modified to N6-succinyllysine: K143 and K150. 167–169 (TGS) is a binding site for FAD. NAD(+) is bound by residues 204 to 211 (GAGVIGVE) and E227. Residues K257 and K261 each carry the N6-succinyllysine modification. V262 is a binding site for NAD(+). The residue at position 269 (S269) is a Phosphoserine. G298 provides a ligand contact to NAD(+). An N6-acetyllysine modification is found at K330. Residues D339 and 345–348 (MLAH) contribute to the FAD site. Residue K394 is modified to N6-acetyllysine; alternate. K394 carries the N6-succinyllysine; alternate modification. N6-acetyllysine is present on residues K401 and K404. K414 bears the N6-succinyllysine mark. The active-site Proton acceptor is H471.

It belongs to the class-I pyridine nucleotide-disulfide oxidoreductase family. As to quaternary structure, homodimer. Part of the multimeric pyruvate dehydrogenase complex that contains multiple copies of pyruvate dehydrogenase (subunits PDHA (PDHA1 or PDHA2) and PDHB, E1), dihydrolipoamide acetyltransferase (DLAT, E2) and lipoamide dehydrogenase (DLD, E3). These subunits are bound to an inner core composed of about 48 DLAT and 12 PDHX molecules (by non covalent bonds). The 2-oxoglutarate dehydrogenase complex is composed of OGDH (2-oxoglutarate dehydrogenase; E1), DLST (dihydrolipoamide succinyltransferase; E2) and DLD (dihydrolipoamide dehydrogenase; E3). It contains multiple copies of the three enzymatic components (E1, E2 and E3). In the nucleus, the 2-oxoglutarate dehydrogenase complex associates with KAT2A. Interacts with PDHX. FAD is required as a cofactor. In terms of processing, tyrosine phosphorylated. As to expression, expressed in testis (at protein level).

Its subcellular location is the mitochondrion matrix. It is found in the nucleus. The protein resides in the cell projection. The protein localises to the cilium. It localises to the flagellum. Its subcellular location is the cytoplasmic vesicle. It is found in the secretory vesicle. The protein resides in the acrosome. It carries out the reaction N(6)-[(R)-dihydrolipoyl]-L-lysyl-[protein] + NAD(+) = N(6)-[(R)-lipoyl]-L-lysyl-[protein] + NADH + H(+). Its function is as follows. Lipoamide dehydrogenase is a component of the glycine cleavage system as well as an E3 component of three alpha-ketoacid dehydrogenase complexes (pyruvate-, alpha-ketoglutarate-, and branched-chain amino acid-dehydrogenase complex). The 2-oxoglutarate dehydrogenase complex is mainly active in the mitochondrion. A fraction of the 2-oxoglutarate dehydrogenase complex also localizes in the nucleus and is required for lysine succinylation of histones: associates with KAT2A on chromatin and provides succinyl-CoA to histone succinyltransferase KAT2A. In monomeric form may have additional moonlighting function as serine protease. Involved in the hyperactivation of spermatazoa during capacitation and in the spermatazoal acrosome reaction. This Mesocricetus auratus (Golden hamster) protein is Dihydrolipoyl dehydrogenase, mitochondrial (DLD).